A 254-amino-acid polypeptide reads, in one-letter code: Adenosylcobinamide-GDP ribazoletransferase (254 aa).

7 helical membrane passes run 29-49 (LFWFPVVGLLLGSIQAALGYF), 50-70 (TSLLGWNELSAAFVVLGGIAL), 98-118 (IMKDPNVGSFGAIALSGMMLL), 121-141 (IAILKLVDIGAFACIAAGVLL), 170-190 (AGVVHIVVTSALTLLFLFPLL), 198-218 (LYAVVAMISAALAAALLTGLL), and 230-250 (VLGAGSEVTELFVWIAAALSA).

This sequence belongs to the CobS family. It depends on Mg(2+) as a cofactor.

It is found in the cell inner membrane. The catalysed reaction is alpha-ribazole + adenosylcob(III)inamide-GDP = adenosylcob(III)alamin + GMP + H(+). It catalyses the reaction alpha-ribazole 5'-phosphate + adenosylcob(III)inamide-GDP = adenosylcob(III)alamin 5'-phosphate + GMP + H(+). Its pathway is cofactor biosynthesis; adenosylcobalamin biosynthesis; adenosylcobalamin from cob(II)yrinate a,c-diamide: step 7/7. Its function is as follows. Joins adenosylcobinamide-GDP and alpha-ribazole to generate adenosylcobalamin (Ado-cobalamin). Also synthesizes adenosylcobalamin 5'-phosphate from adenosylcobinamide-GDP and alpha-ribazole 5'-phosphate. The polypeptide is Adenosylcobinamide-GDP ribazoletransferase (Pelodictyon phaeoclathratiforme (strain DSM 5477 / BU-1)).